The following is a 684-amino-acid chain: Signal peptide peptidase-like 2C (684 aa).

The first 21 residues, 1-21 (MACLGFLLPVGFLLLISTVAG), serve as a signal peptide directing secretion. The Lumenal portion of the chain corresponds to 22-186 (GKYGVAHVVS…APPEPIIDYN (165 aa)). The 81-residue stretch at 83-163 (SPSQRPLRQT…HYADMLDILS (81 aa)) folds into the PA domain. Asn100 is a glycosylation site (N-linked (GlcNAc...) asparagine). Residues 187 to 207 (MLVIFILAVGTVAAGGYWAGL) traverse the membrane as a helical segment. Over 208 to 253 (TEANRLQRRRARRGGGSGGHHQLQEAAAAEGAQKEDNEDIPVDFTP) the chain is Cytoplasmic. The disordered stretch occupies residues 216 to 242 (RRARRGGGSGGHHQLQEAAAAEGAQKE). Residues 227–238 (HHQLQEAAAAEG) are compositionally biased toward low complexity. The chain crosses the membrane as a helical span at residues 254-274 (AMTGVVVTLSCSLMLLLYFFY). The Lumenal segment spans residues 275-276 (DH). Residues 277 to 297 (FVYVTIGIFGLGAGIGLYSCL) form a helical membrane-spanning segment. Residues 298 to 319 (SPLVCRLSLRQYQRPPHSLWAS) are Cytoplasmic-facing. A helical membrane pass occupies residues 320-340 (LPLPLLLLASLCATVIIFWVA). At 341 to 346 (YRNEDR) the chain is on the lumenal side. Residues 347-365 (WAWLLQDTLGISYCLFVLH) form a helical membrane-spanning segment. The Cytoplasmic portion of the chain corresponds to 366 to 376 (RVRLPTLKNCS). Residues 377–397 (SFLLALLAFDVFFVFVTPFFT) form a helical membrane-spanning segment. Asp386 is a catalytic residue. The Lumenal portion of the chain corresponds to 398-439 (KTGESIMAQVALGPAESSSHERLPMVLKVPRLRVSALTLCSQ). A helical membrane pass occupies residues 440 to 460 (PFSILGFGDIVVPGFLVAYCC). The active site involves Asp448. The Cytoplasmic portion of the chain corresponds to 461–472 (RFDVQVCSRQIY). The chain crosses the membrane as a helical span at residues 473–493 (FVACTVAYAVGLLVTFMAMVL). The Lumenal segment spans residues 494-495 (MQ). Residues 496-516 (MGQPALLYLVSSTLLTSLAVA) form a helical membrane-spanning segment. Residues 499 to 501 (PAL) carry the PAL motif. Topologically, residues 517–684 (ACRQELSLFW…RKSMSTQAPL (168 aa)) are cytoplasmic. The interval 548 to 614 (KQEGAADAHT…SDAHLDPNEL (67 aa)) is disordered. Residues 582-592 (EIVTISENEAT) are compositionally biased toward polar residues. Positions 594-611 (PEDRSDSSEGWSDAHLDP) are enriched in basic and acidic residues.

The protein belongs to the peptidase A22B family. Interacts (via active sites) with FREY; the interaction stabilizes FREY1 protein and inhibits SPPL2C proteolytic activity. Post-translationally, glycosylated. As to expression, highly expressed in testis where it is primarily localised in spermatids (at protein level).

The protein resides in the endoplasmic reticulum membrane. In terms of biological role, sperm-specific intramembrane-cleaving aspartic protease (I-CLiP) that cleaves distinct tail-anchored proteins and SNARE proteins. In elongated spermatids, modulates intracellular Ca(2+) homeostasis by controlling PLN abundance through proteolytic cleavage. During spermatogenesis, processes SNARE proteins and impacts vesicular trafficking which supports compartmental reorganization in maturating spermatids and may play a role in formation of the acrosome. Functionally, in round spermatids, acts as a scaffold protein supporting FREY1 in IZUMO1 recruitment at the endoplasmic reticulum membrane and coordination of IZUMO1 complex assembly. Stabilizes FREY1 at the endoplasmic reticulum membrane through interaction. May recruit IZUMO1 interaction partners. The chain is Signal peptide peptidase-like 2C from Homo sapiens (Human).